The primary structure comprises 229 residues: Lipoprotein-releasing system ATP-binding protein LolD (229 aa).

One can recognise an ABC transporter domain in the interval 7-229; sequence LQCINLTKSF…KNGQLFNNKN (223 aa). Position 43–50 (43–50) interacts with ATP; the sequence is GKSGSGKS.

It belongs to the ABC transporter superfamily. Lipoprotein translocase (TC 3.A.1.125) family. As to quaternary structure, the complex is composed of two ATP-binding proteins (LolD) and two transmembrane proteins (LolC and LolE).

Its subcellular location is the cell inner membrane. Functionally, part of the ABC transporter complex LolCDE involved in the translocation of mature outer membrane-directed lipoproteins, from the inner membrane to the periplasmic chaperone, LolA. Responsible for the formation of the LolA-lipoprotein complex in an ATP-dependent manner. This is Lipoprotein-releasing system ATP-binding protein LolD from Buchnera aphidicola subsp. Schizaphis graminum (strain Sg).